A 1281-amino-acid chain; its full sequence is Tubulin polyglutamylase TTLL5 (1281 aa).

Residues 62 to 407 (RYHLSYKIVR…VCQDPAQRAS (346 aa)) form the TTL domain. Residues lysine 180, 186–187 (RG), 208–211 (SRYI), and 221–223 (KFD) contribute to the ATP site. Position 186 (arginine 186) interacts with a protein. An L-glutamate-binding site is contributed by arginine 247. Residue 268-269 (TN) participates in ATP binding. Tyrosine 270, serine 271, and lysine 293 together coordinate L-glutamate. Residues aspartate 353, glutamate 366, and asparagine 368 each coordinate Mg(2+). The tract at residues 378–488 (PLDLKIKASM…RGGFIRIFPT (111 aa)) is c-MTBD region. Lysine 384 contributes to the L-glutamate binding site. 3 disordered regions span residues 577-614 (MNVKTETESEEEEEVALDNEDEEQEASQEESAGFLREN), 1072-1114 (SASA…LQTG), and 1199-1281 (SSAT…HTKI). The span at 584–604 (ESEEEEEVALDNEDEEQEASQ) shows a compositional bias: acidic residues. Polar residues-rich tracts occupy residues 1086-1113 (SGPTWSTQSDPQAPENHSSSPGSRSLQT), 1199-1212 (SSATASGQKPTTLP), 1240-1263 (ATSQKASKGSSAEGQLNGLQSSLN), and 1270-1281 (ITSSTDPAHTKI).

The protein belongs to the tubulin--tyrosine ligase family. In terms of assembly, interacts with the transcriptional coactivators NCOA1/SRC-1 and NCOA2/TIF2. Requires Mg(2+) as cofactor. In terms of tissue distribution, expressed in the retina, found in the rod and cone photoreceptors (at protein level). Widely expressed with highest levels in heart and skeletal muscle and low levels in other tissues.

The protein localises to the cell projection. It is found in the cilium. It localises to the cytoplasm. Its subcellular location is the cytoskeleton. The protein resides in the cilium basal body. The protein localises to the nucleus. The catalysed reaction is L-glutamyl-[protein] + L-glutamate + ATP = gamma-L-glutamyl-L-glutamyl-[protein] + ADP + phosphate + H(+). It carries out the reaction (L-glutamyl)(n)-gamma-L-glutamyl-L-glutamyl-[protein] + L-glutamate + ATP = (L-glutamyl)(n+1)-gamma-L-glutamyl-L-glutamyl-[protein] + ADP + phosphate + H(+). In terms of biological role, polyglutamylase which modifies tubulin, generating polyglutamate side chains on the gamma-carboxyl group of specific glutamate residues within the C-terminal tail of tubulin. Preferentially mediates ATP-dependent initiation step of the polyglutamylation reaction over the elongation step. Preferentially modifies the alpha-tubulin tail over a beta-tail. Required for CCSAP localization to both polyglutamylated spindle and cilia microtubules. Increases the effects of transcriptional coactivator NCOA2/TIF2 in glucocorticoid receptor-mediated repression and induction and in androgen receptor-mediated induction. This chain is Tubulin polyglutamylase TTLL5, found in Homo sapiens (Human).